The chain runs to 423 residues: Adenylosuccinate synthetase (423 aa).

GTP-binding positions include 12 to 18 (GDEGKGK) and 40 to 42 (GHT). Residue D13 is the Proton acceptor of the active site. Mg(2+) contacts are provided by D13 and G40. Residues 13–16 (DEGK), 38–41 (NAGH), T128, R142, Q223, T238, and R302 each bind IMP. H41 (proton donor) is an active-site residue. Position 298–304 (298–304 (TTTGRPR)) interacts with substrate. Residues R304, 330–332 (RLD), and 412–414 (CIG) each bind GTP.

It belongs to the adenylosuccinate synthetase family. Homodimer. It depends on Mg(2+) as a cofactor.

The protein localises to the cytoplasm. The enzyme catalyses IMP + L-aspartate + GTP = N(6)-(1,2-dicarboxyethyl)-AMP + GDP + phosphate + 2 H(+). The protein operates within purine metabolism; AMP biosynthesis via de novo pathway; AMP from IMP: step 1/2. Functionally, plays an important role in the de novo pathway of purine nucleotide biosynthesis. Catalyzes the first committed step in the biosynthesis of AMP from IMP. The sequence is that of Adenylosuccinate synthetase from Dehalococcoides mccartyi (strain ATCC BAA-2266 / KCTC 15142 / 195) (Dehalococcoides ethenogenes (strain 195)).